Here is a 122-residue protein sequence, read N- to C-terminus: NADH-quinone oxidoreductase subunit A (122 aa).

A run of 3 helical transmembrane segments spans residues 10–30 (MIVLIFLLLGILLPVVALTLG), 66–86 (IFALLFVIFDVETLFLYPWAV), and 91–111 (LGLFALIEMLIFVVMLLVGLA).

Belongs to the complex I subunit 3 family. NDH-1 is composed of 14 different subunits. Subunits NuoA, H, J, K, L, M, N constitute the membrane sector of the complex.

The protein resides in the cell membrane. It carries out the reaction a quinone + NADH + 5 H(+)(in) = a quinol + NAD(+) + 4 H(+)(out). In terms of biological role, NDH-1 shuttles electrons from NADH, via FMN and iron-sulfur (Fe-S) centers, to quinones in the respiratory chain. The immediate electron acceptor for the enzyme in this species is believed to be a menaquinone. Couples the redox reaction to proton translocation (for every two electrons transferred, four hydrogen ions are translocated across the cytoplasmic membrane), and thus conserves the redox energy in a proton gradient. The polypeptide is NADH-quinone oxidoreductase subunit A (Bacillus mycoides (strain KBAB4) (Bacillus weihenstephanensis)).